The sequence spans 1711 residues: Receptor-type tyrosine-protein phosphatase V (1711 aa).

The N-terminal stretch at M1–L17 is a signal peptide. The Extracellular portion of the chain corresponds to A18–A1074. 10 Fibronectin type-III domains span residues P37–T129, V130–D222, P218–Y305, P306–S391, A393–Y470, P475–T569, P565–T654, P655–E749, P744–V831, and E832–A926. N-linked (GlcNAc...) asparagine glycosylation is found at N42, N74, N89, N117, N174, N239, and N259. An N-linked (GlcNAc...) asparagine glycan is attached at N431. N570, N620, N649, N663, and N737 each carry an N-linked (GlcNAc...) asparagine glycan. Residues N851, N882, N970, and N982 are each glycosylated (N-linked (GlcNAc...) asparagine). A helical membrane pass occupies residues I1075 to V1095. Topologically, residues L1096–C1711 are cytoplasmic. 2 Tyrosine-protein phosphatase domains span residues F1150–K1409 and D1427–A1696. Residues D1316, C1350–R1356, and Q1394 each bind substrate. C1350 (phosphocysteine intermediate) is an active-site residue.

This sequence belongs to the protein-tyrosine phosphatase family. Receptor class 3 subfamily. The cytoplasmic domain contains potential phosphorylation sites. In terms of tissue distribution, bone and testis. In the latter, restricted to the basal portion of the seminiferous tubule.

It localises to the membrane. The enzyme catalyses O-phospho-L-tyrosyl-[protein] + H2O = L-tyrosyl-[protein] + phosphate. Its function is as follows. Protein tyrosine phosphatase that acts as a regulator of energy metabolism. Prevents decarboxylation of osteocalcin (Bglap) via an indirect mechanism, preventing the hormone activity of osteocalcin. Functions in signaling pathways during bone remodeling, as well as serve a broader role in cell interactions associated with differentiation in bone and testis. Associated with differentiation in bone and testis. This Rattus norvegicus (Rat) protein is Receptor-type tyrosine-protein phosphatase V (Ptprv).